Consider the following 258-residue polypeptide: Tryptophan synthase alpha chain (258 aa).

Catalysis depends on proton acceptor residues glutamate 47 and aspartate 58.

The protein belongs to the TrpA family. As to quaternary structure, tetramer of two alpha and two beta chains.

The enzyme catalyses (1S,2R)-1-C-(indol-3-yl)glycerol 3-phosphate + L-serine = D-glyceraldehyde 3-phosphate + L-tryptophan + H2O. Its pathway is amino-acid biosynthesis; L-tryptophan biosynthesis; L-tryptophan from chorismate: step 5/5. The alpha subunit is responsible for the aldol cleavage of indoleglycerol phosphate to indole and glyceraldehyde 3-phosphate. The protein is Tryptophan synthase alpha chain of Bacillus mycoides (strain KBAB4) (Bacillus weihenstephanensis).